A 262-amino-acid polypeptide reads, in one-letter code: Malonyl-[acyl-carrier protein] O-methyltransferase (262 aa).

It belongs to the methyltransferase superfamily.

The catalysed reaction is malonyl-[ACP] + S-adenosyl-L-methionine = malonyl-[ACP] methyl ester + S-adenosyl-L-homocysteine. It participates in cofactor biosynthesis; biotin biosynthesis. Its function is as follows. Converts the free carboxyl group of a malonyl-thioester to its methyl ester by transfer of a methyl group from S-adenosyl-L-methionine (SAM). It allows to synthesize pimeloyl-ACP via the fatty acid synthetic pathway. This Erwinia pyrifoliae (strain DSM 12163 / CIP 106111 / Ep16/96) protein is Malonyl-[acyl-carrier protein] O-methyltransferase.